The sequence spans 467 residues: UDP-N-acetylmuramate--L-alanine ligase (467 aa).

Residue 114 to 120 participates in ATP binding; it reads GTHGKTT.

The protein belongs to the MurCDEF family.

It localises to the cytoplasm. It catalyses the reaction UDP-N-acetyl-alpha-D-muramate + L-alanine + ATP = UDP-N-acetyl-alpha-D-muramoyl-L-alanine + ADP + phosphate + H(+). The protein operates within cell wall biogenesis; peptidoglycan biosynthesis. Its function is as follows. Cell wall formation. The chain is UDP-N-acetylmuramate--L-alanine ligase from Nitrobacter hamburgensis (strain DSM 10229 / NCIMB 13809 / X14).